The following is a 313-amino-acid chain: Aspartate carbamoyltransferase catalytic subunit (313 aa).

Carbamoyl phosphate is bound by residues Arg-61 and Thr-62. Lys-89 lines the L-aspartate pocket. Residues Arg-111, His-139, and Gln-142 each contribute to the carbamoyl phosphate site. The L-aspartate site is built by Arg-172 and Arg-227. Carbamoyl phosphate contacts are provided by Gly-268 and Pro-269.

Belongs to the aspartate/ornithine carbamoyltransferase superfamily. ATCase family. As to quaternary structure, heterododecamer (2C3:3R2) of six catalytic PyrB chains organized as two trimers (C3), and six regulatory PyrI chains organized as three dimers (R2).

It catalyses the reaction carbamoyl phosphate + L-aspartate = N-carbamoyl-L-aspartate + phosphate + H(+). It participates in pyrimidine metabolism; UMP biosynthesis via de novo pathway; (S)-dihydroorotate from bicarbonate: step 2/3. In terms of biological role, catalyzes the condensation of carbamoyl phosphate and aspartate to form carbamoyl aspartate and inorganic phosphate, the committed step in the de novo pyrimidine nucleotide biosynthesis pathway. The chain is Aspartate carbamoyltransferase catalytic subunit from Gluconobacter oxydans (strain 621H) (Gluconobacter suboxydans).